The sequence spans 365 residues: tRNA 2-selenouridine synthase (365 aa).

The 124-residue stretch at 15–138 folds into the Rhodanese domain; sequence FIAGQPLIDL…MRQYLIGVIE (124 aa). Cys-98 serves as the catalytic S-selanylcysteine intermediate.

Belongs to the SelU family. Monomer.

The catalysed reaction is 5-methylaminomethyl-2-thiouridine(34) in tRNA + selenophosphate + (2E)-geranyl diphosphate + H2O + H(+) = 5-methylaminomethyl-2-selenouridine(34) in tRNA + (2E)-thiogeraniol + phosphate + diphosphate. The enzyme catalyses 5-methylaminomethyl-2-thiouridine(34) in tRNA + (2E)-geranyl diphosphate = 5-methylaminomethyl-S-(2E)-geranyl-thiouridine(34) in tRNA + diphosphate. It catalyses the reaction 5-methylaminomethyl-S-(2E)-geranyl-thiouridine(34) in tRNA + selenophosphate + H(+) = 5-methylaminomethyl-2-(Se-phospho)selenouridine(34) in tRNA + (2E)-thiogeraniol. It carries out the reaction 5-methylaminomethyl-2-(Se-phospho)selenouridine(34) in tRNA + H2O = 5-methylaminomethyl-2-selenouridine(34) in tRNA + phosphate. Its function is as follows. Involved in the post-transcriptional modification of the uridine at the wobble position (U34) of tRNA(Lys), tRNA(Glu) and tRNA(Gln). Catalyzes the conversion of 2-thiouridine (S2U-RNA) to 2-selenouridine (Se2U-RNA). Acts in a two-step process involving geranylation of 2-thiouridine (S2U) to S-geranyl-2-thiouridine (geS2U) and subsequent selenation of the latter derivative to 2-selenouridine (Se2U) in the tRNA chain. The protein is tRNA 2-selenouridine synthase of Shewanella sp. (strain ANA-3).